Reading from the N-terminus, the 1361-residue chain is uncharacterized protein (1361 aa).

This sequence belongs to the IIV-6 261R/396L/443R family.

This is an uncharacterized protein from Invertebrate iridescent virus 6 (IIV-6).